Consider the following 185-residue polypeptide: Ribosome-recycling factor (185 aa).

It belongs to the RRF family.

Its subcellular location is the cytoplasm. In terms of biological role, responsible for the release of ribosomes from messenger RNA at the termination of protein biosynthesis. May increase the efficiency of translation by recycling ribosomes from one round of translation to another. The polypeptide is Ribosome-recycling factor (Shewanella halifaxensis (strain HAW-EB4)).